The primary structure comprises 224 residues: Ribosomal RNA large subunit methyltransferase E (224 aa).

5 residues coordinate S-adenosyl-L-methionine: glycine 60, tryptophan 62, aspartate 93, aspartate 109, and aspartate 137. The active-site Proton acceptor is the lysine 177.

This sequence belongs to the class I-like SAM-binding methyltransferase superfamily. RNA methyltransferase RlmE family.

It localises to the cytoplasm. It catalyses the reaction uridine(2552) in 23S rRNA + S-adenosyl-L-methionine = 2'-O-methyluridine(2552) in 23S rRNA + S-adenosyl-L-homocysteine + H(+). Functionally, specifically methylates the uridine in position 2552 of 23S rRNA at the 2'-O position of the ribose in the fully assembled 50S ribosomal subunit. This is Ribosomal RNA large subunit methyltransferase E from Polynucleobacter asymbioticus (strain DSM 18221 / CIP 109841 / QLW-P1DMWA-1) (Polynucleobacter necessarius subsp. asymbioticus).